The sequence spans 287 residues: Universal stress protein Slr1230 (287 aa).

Belongs to the universal stress protein A family.

This chain is Universal stress protein Slr1230, found in Synechocystis sp. (strain ATCC 27184 / PCC 6803 / Kazusa).